We begin with the raw amino-acid sequence, 270 residues long: MSKIFFRLNLVRNSLWRRAASFTSYSELKSLTPYEILELPRTCTANDIKRKYIELVKKHHPDKMKNASQLAPTESPPEINKHNEEYFRLLLAANALLSDKRRREEYDRFGIHWNQPSHPTHPSPQNWSQARYPTYSRSRRSAGMGSWEEYYYNSYDYMNDQNASNKNRKFDDEGMLVFAGILSILVIINIYSNYRNGKFYREARSAAIGRAEDNFDYYSTGMADLSKDDRISRFLILREQSKQIPTQQKPSSLPPPERALPAPTMPTPSS.

Residues 43 to 112 form the J domain; the sequence is CTANDIKRKY…REEYDRFGIH (70 aa). Residues 239–270 form a disordered region; the sequence is EQSKQIPTQQKPSSLPPPERALPAPTMPTPSS. Residues 242–251 are compositionally biased toward polar residues; it reads KQIPTQQKPS. Residues 252–270 are compositionally biased toward pro residues; sequence SLPPPERALPAPTMPTPSS.

This is an uncharacterized protein from Schizosaccharomyces pombe (strain 972 / ATCC 24843) (Fission yeast).